The primary structure comprises 204 residues: Imidazole glycerol phosphate synthase subunit HisH 1 (204 aa).

Residues 5–204 enclose the Glutamine amidotransferase type-1 domain; the sequence is KVVIIDTGCA…AKLIQNFLEL (200 aa). The Nucleophile role is filled by C80. Catalysis depends on residues H186 and E188.

Heterodimer of HisH and HisF.

Its subcellular location is the cytoplasm. The catalysed reaction is 5-[(5-phospho-1-deoxy-D-ribulos-1-ylimino)methylamino]-1-(5-phospho-beta-D-ribosyl)imidazole-4-carboxamide + L-glutamine = D-erythro-1-(imidazol-4-yl)glycerol 3-phosphate + 5-amino-1-(5-phospho-beta-D-ribosyl)imidazole-4-carboxamide + L-glutamate + H(+). It carries out the reaction L-glutamine + H2O = L-glutamate + NH4(+). Its pathway is amino-acid biosynthesis; L-histidine biosynthesis; L-histidine from 5-phospho-alpha-D-ribose 1-diphosphate: step 5/9. In terms of biological role, IGPS catalyzes the conversion of PRFAR and glutamine to IGP, AICAR and glutamate. The HisH subunit provides the glutamine amidotransferase activity that produces the ammonia necessary to HisF for the synthesis of IGP and AICAR. This is Imidazole glycerol phosphate synthase subunit HisH 1 (hisH1) from Vibrio vulnificus (strain YJ016).